An 815-amino-acid chain; its full sequence is Protein SMAX1-LIKE 3 (815 aa).

Positions 8 to 171 (VEQALTADAA…TKVEQAVSLE (164 aa)) constitute a Clp R domain. Repeat regions lie at residues 12 to 80 (LTAD…LNRL) and 99 to 171 (ISNA…VSLE). The segment at 750-769 (SRACSPPSNQKSDGSDQPED) is disordered. An EAR motif is present at residues 778–782 (LDLNL).

This sequence belongs to the ClpA/ClpB family. In terms of assembly, interacts probably with TPL/TPR in an EAR-motif dependent manner. In terms of tissue distribution, expressed in roots and seedlings.

In terms of biological role, may function in a transcriptional corepressor complex. The protein is Protein SMAX1-LIKE 3 of Arabidopsis thaliana (Mouse-ear cress).